The chain runs to 431 residues: Probable glucarate dehydratase (431 aa).

Substrate-binding residues include His-29, Thr-108, Tyr-153, and Lys-198. Lys-200 functions as the Proton acceptor in the catalytic mechanism. 2 residues coordinate Mg(2+): Asp-228 and Asn-276. Substrate contacts are provided by residues Asp-228–Asn-230, Asn-276, His-327–Asn-329, His-356, and Arg-410. Catalysis depends on His-327, which acts as the Proton acceptor.

The protein belongs to the mandelate racemase/muconate lactonizing enzyme family. GlucD subfamily. The cofactor is Mg(2+).

The catalysed reaction is D-glucarate = 5-dehydro-4-deoxy-D-glucarate + H2O. It participates in carbohydrate acid metabolism; D-glucarate degradation; 2,5-dioxopentanoate from D-glucarate: step 1/2. Its function is as follows. Catalyzes the dehydration of glucarate to 5-keto-4-deoxy-D-glucarate (5-kdGluc). The chain is Probable glucarate dehydratase (gudD) from Streptomyces coelicolor (strain ATCC BAA-471 / A3(2) / M145).